The chain runs to 299 residues: Aspartate carbamoyltransferase catalytic subunit (299 aa).

Carbamoyl phosphate contacts are provided by Arg-54 and Thr-55. Lys-83 lines the L-aspartate pocket. Residues Arg-104, His-132, and Gln-135 each coordinate carbamoyl phosphate. L-aspartate contacts are provided by Arg-165 and Arg-222. Carbamoyl phosphate contacts are provided by Leu-261 and Pro-262.

Belongs to the aspartate/ornithine carbamoyltransferase superfamily. ATCase family. In terms of assembly, heterooligomer of catalytic and regulatory chains.

The enzyme catalyses carbamoyl phosphate + L-aspartate = N-carbamoyl-L-aspartate + phosphate + H(+). It functions in the pathway pyrimidine metabolism; UMP biosynthesis via de novo pathway; (S)-dihydroorotate from bicarbonate: step 2/3. Catalyzes the condensation of carbamoyl phosphate and aspartate to form carbamoyl aspartate and inorganic phosphate, the committed step in the de novo pyrimidine nucleotide biosynthesis pathway. The chain is Aspartate carbamoyltransferase catalytic subunit from Archaeoglobus fulgidus (strain ATCC 49558 / DSM 4304 / JCM 9628 / NBRC 100126 / VC-16).